The sequence spans 215 residues: MADLHRQLQEYLAQGKAGGPAAAEPLLAAEKAEEPGDRPAEEWLGRAGLRWTWARSPAESAAAGLTCLPSVTRGQRLAAGGGCLLLAALCFGLAALYAPVLLLRARKFALLWSLGSALALAGSALLRGGAACGRLLRCEEAPSRPALLYMAALGATLFAALGLRSTLLTVLGAGAQVAALLAALVGLLPWGGGTALRLALGRLGRGAGLAKVLPV.

Residues 1 to 82 (MADLHRQLQE…RGQRLAAGGG (82 aa)) lie on the Cytoplasmic side of the membrane. A helical transmembrane segment spans residues 83 to 103 (CLLLAALCFGLAALYAPVLLL). The Lumenal segment spans residues 104 to 107 (RARK). A helical transmembrane segment spans residues 108 to 128 (FALLWSLGSALALAGSALLRG). Residues 129–142 (GAACGRLLRCEEAP) lie on the Cytoplasmic side of the membrane. The helical transmembrane segment at 143 to 163 (SRPALLYMAALGATLFAALGL) threads the bilayer. Residues 164–166 (RST) lie on the Lumenal side of the membrane. Residues 167–187 (LLTVLGAGAQVAALLAALVGL) traverse the membrane as a helical segment. The Cytoplasmic segment spans residues 188 to 215 (LPWGGGTALRLALGRLGRGAGLAKVLPV).

Belongs to the SFT2 family.

It is found in the membrane. May be involved in fusion of retrograde transport vesicles derived from an endocytic compartment with the Golgi complex. The sequence is that of Vesicle transport protein SFT2C from Homo sapiens (Human).